The following is a 557-amino-acid chain: MKVDYEQLCKLYDDTCRTKNVQFSYGTAGFRTLAKNLDTVMFSTGILAVLRSLKLQGQYVGVMITASHNPYQDNGVKIVEPDGSMLLATWEPYAMQLANAASFATNFEEFRVELAKLIEHEKIDLNTTVVPHIVVGRDSRESSPYLLRCLTSSMASVFHAQVLDLGCVTTPQLHYITDLSNRRKLEGDTAPVATEQDYYSFFIGAFNELFATYQLEKRLSVPKLFIDTANGIGGPQLKKLLASEDWDVPAEQVEVINDRSDVPELLNFECGADYVKTNQRLPKGLSPSSFDSLYCSFDGDADRVVFYYVDSGSKFHLLDGDKISTLFAKFLSKQLELAHLEHSLKIGVVQTAYANGSSTAYIKNTLHCPVSCTKTGVKHLHHEAATQYDIGIYFEANGHGTIIFSEKFHRTIKSELSKSKLNGDTLALRTLKCFSELINQTVGDAISDMLAVLATLAILKMSPMDWDEEYTDLPNKLVKCIVPDRSIFQTTDQERKLLNPVGLQDKIDLVVAKYPMGRSFVRASGTEDAVRVYAECKDSSKLGQFCDEVVEHVKASA.

S67 serves as the catalytic Phosphoserine intermediate. Residues S67, D298, D300, and D302 each contribute to the Mg(2+) site. A Phosphoserine modification is found at S67. Substrate-binding positions include 395–397 (EAN), 522–526 (RASGT), and R531.

Belongs to the phosphohexose mutase family. Mg(2+) serves as cofactor.

The protein resides in the cytoplasm. It localises to the nucleus. It catalyses the reaction N-acetyl-alpha-D-glucosamine 1-phosphate = N-acetyl-D-glucosamine 6-phosphate. The protein operates within nucleotide-sugar biosynthesis; UDP-N-acetyl-alpha-D-glucosamine biosynthesis; N-acetyl-alpha-D-glucosamine 1-phosphate from alpha-D-glucosamine 6-phosphate (route I): step 2/2. Its function is as follows. Catalyzes the conversion of GlcNAc-6-P into GlcNAc-1-P during the synthesis of uridine diphosphate/UDP-GlcNAc, which is a biosynthetic precursor of chitin and also supplies the amino sugars for N-linked oligosaccharides of glycoproteins. Also has phosphoglucomutase activity. This Saccharomyces cerevisiae (strain ATCC 204508 / S288c) (Baker's yeast) protein is Phosphoacetylglucosamine mutase.